The sequence spans 508 residues: MGLPWYRVHTVVLNDPGRLISVHLMHTALVSGWAGSMALYELAVFDPSDPVLDPMWRQGMFVIPFMTRIGVSKSWGGWIITGDTSTDAGIWSYEGVAAAHIILSGLLFLAAIWHWVYWDLDLFRDDRTGKPSLDLPKIFGIHLFLSGVLCFSFGAFHVTGLFGPGIWISDPYGLTGKVEPVDPAWGAEGFDPFIPGGIASHHIAAGVLGILAGLFHLSVRPPQRLYKALRMGNVETVLSSSIAAVFFAAFVVSGTMWYGSAATPIELFGPTRYQWDQGYFQQEIERRIRLGEAENLSLSQVWSKIPEKLAFYDYIGNNPAKGGLFRAGAMDNGDGIAVGWLGHALFKDREGRELFVRRMPTFFETFPVVLVDGEGVVRADVPFRRAESKYSVEQVGVTVDFFGGELDGASFSDPATVKKYARRAQLGEIFEFDRATLKSDGVFRSSPRGWFTFGHTTFALIFFFGHIWHGARTLFRDVFAGIDPDLDAQVEFGAFQKLGDPSTKKQAV.

Helical transmembrane passes span 21-36, 101-115, 140-156, 203-218, 237-252, and 457-472; these read SVHL…WAGS, IILS…IWHW, GIHL…FGAF, IAAG…FHLS, VLSS…AFVV, and TFAL…HGAR.

This sequence belongs to the PsbB/PsbC family. PsbB subfamily. In terms of assembly, PSII is composed of 1 copy each of membrane proteins PsbA, PsbB, PsbC, PsbD, PsbE, PsbF, PsbH, PsbI, PsbJ, PsbK, PsbL, PsbM, PsbT, PsbX, PsbY, PsbZ, Psb30/Ycf12, at least 3 peripheral proteins of the oxygen-evolving complex and a large number of cofactors. It forms dimeric complexes. Binds multiple chlorophylls. PSII binds additional chlorophylls, carotenoids and specific lipids. serves as cofactor.

The protein resides in the plastid. Its subcellular location is the chloroplast thylakoid membrane. Functionally, one of the components of the core complex of photosystem II (PSII). It binds chlorophyll and helps catalyze the primary light-induced photochemical processes of PSII. PSII is a light-driven water:plastoquinone oxidoreductase, using light energy to abstract electrons from H(2)O, generating O(2) and a proton gradient subsequently used for ATP formation. This is Photosystem II CP47 reaction center protein from Adiantum capillus-veneris (Maidenhair fern).